The sequence spans 699 residues: MNLLPKSSREFGSVDYWEKFFQQRGKKAFEWYGTYLELCGVLHKYIKPREKVLVIGCGNSELSEQLYDVGYRDIVNIDISEVVIKQMKECNATRRPQMSFLKMDMTQMEFPDASFQVVLDKGTLDAVLTDEEEKTLQQVDRMLAEVGRVLQVGGRYLCISLAQAHILKKAVGHFSREGWMVRVHQVANSQDQVLEAEPQFSLPVFAFIMTKFRPVPGSALQIFELCAQEQRKPVRLESAERLAEAVQERQQYAWLCSQLRRKARLGSVSLDLCDGDTGEPRYTLHVVDSPTVKPSRDNHFAIFIIPQGRETEWLFGMDEGRKQLAASAGFRRLITVALHRGQQYESMDHIQAELSARVMELAPAGMPTQQQVPFLSVGGDIGVRTVQHQDCSPLSGDYVIEDVQGDDKRYFRRLIFLSNRNVVQSEARLLKDVSHKAQKKRKKDRKKQRPADAEDLPAAPGQSIDKSYLCCEHHKAMIAGLALLRNPELLLEIPLALLVVGLGGGSLPLFVHDHFPKSCIDAVEIDPSMLEVATQWFGFSQSDRMKVHIADGLDYIASLAGGGEARPCYDVIMFDVDSKDPTLGMSCPPPAFVEQSFLQKVKSILTPEGVFILNLVCRDLGLKDSVLAGLKAVFPLLYVRRIEGEVNEILFCQLHPEQKLATPELLETAQALERTLRKPGRGWDDTYVLSDMLKTVKIV.

Methionine 1 carries the post-translational modification N-acetylmethionine. Position 267 is a phosphoserine (serine 267). The disordered stretch occupies residues valine 433–alanine 459. A compositionally biased stretch (basic residues) spans lysine 436–glutamine 448.

This sequence belongs to the methyltransferase superfamily. In terms of assembly, forms a tripartite complex containing GAB1, METTL13 and SPRY2. Within the complex interacts with GAB1 and SPRY2.

Its subcellular location is the cytoplasm. It is found in the nucleus. The protein resides in the mitochondrion. It catalyses the reaction L-lysyl-[protein] + S-adenosyl-L-methionine = N(6)-methyl-L-lysyl-[protein] + S-adenosyl-L-homocysteine + H(+). It carries out the reaction N(6)-methyl-L-lysyl-[protein] + S-adenosyl-L-methionine = N(6),N(6)-dimethyl-L-lysyl-[protein] + S-adenosyl-L-homocysteine + H(+). The catalysed reaction is N-terminal glycyl-L-lysyl-L-glutamyl-[protein] + 3 S-adenosyl-L-methionine = N-terminal N,N,N-trimethyl-glycyl-L-lysyl-L-glutamyl-[protein] + 3 S-adenosyl-L-homocysteine + 3 H(+). With respect to regulation, protein N-terminal methyltransferase activity is inhibited by GTP and GDP. Its function is as follows. Dual methyltransferase that catalyzes methylation of elongation factor 1-alpha (EEF1A1 and EEF1A2) at two different positions, and is therefore involved in the regulation of mRNA translation. Via its C-terminus, methylates EEF1A1 and EEF1A2 at the N-terminal residue 'Gly-2'. Via its N-terminus dimethylates EEF1A1 and EEF1A2 at residue 'Lys-55'. Has no activity towards core histones H2A, H2B, H3 and H4. In Homo sapiens (Human), this protein is eEF1A lysine and N-terminal methyltransferase.